Consider the following 245-residue polypeptide: tRNA pseudouridine synthase A (245 aa).

The active-site Nucleophile is the D52. Y111 contacts substrate.

It belongs to the tRNA pseudouridine synthase TruA family. Homodimer.

The catalysed reaction is uridine(38/39/40) in tRNA = pseudouridine(38/39/40) in tRNA. In terms of biological role, formation of pseudouridine at positions 38, 39 and 40 in the anticodon stem and loop of transfer RNAs. This Nitrobacter hamburgensis (strain DSM 10229 / NCIMB 13809 / X14) protein is tRNA pseudouridine synthase A.